The primary structure comprises 725 residues: Kelch domain-containing protein SSO1033 (725 aa).

A signal peptide spans 1 to 28 (MKYGNMKKWAPLILFLFSLLLLQGISLH). 6 Kelch repeats span residues 59 to 100 (SLYI…VYNN), 101 to 145 (TIYV…VYNN), 146 to 199 (AIYV…FNGT), 201 to 248 (LIIV…YYRG), 250 to 297 (LFIV…QVGN), and 299 to 342 (LYLA…VTLG). Fibronectin type-III domains follow at residues 323–410 (PPLP…TPAS), 411–504 (VPNP…TKAS), 505–583 (VFAF…VVYY), and 585–665 (PPAS…TGDY).

This is Kelch domain-containing protein SSO1033 from Saccharolobus solfataricus (strain ATCC 35092 / DSM 1617 / JCM 11322 / P2) (Sulfolobus solfataricus).